Reading from the N-terminus, the 575-residue chain is Amyloid-beta A4 precursor protein-binding family A member 3 (575 aa).

Met1 is modified (N-acetylmethionine). The segment covering 1–10 (MDFPTISRSP) has biased composition (polar residues). Disordered regions lie at residues 1–50 (MDFP…LSRM) and 118–211 (CEEC…GPCD). Ser11 is subject to Phosphoserine. Over residues 143-153 (EDPDEDSDSPE) the composition is skewed to acidic residues. Low complexity predominate over residues 156-184 (EGASAEQEGSRSSSSSPEPWLETVPLVTP). Ser171 carries the post-translational modification Phosphoserine. The tract at residues 215-364 (LLDGVIFGAR…QFLRESGIDP (150 aa)) is required for interaction with NECAB3. The PID domain maps to 217 to 381 (DGVIFGARYL…SPGACHLHNG (165 aa)). Ser372 is modified (phosphoserine). PDZ domains follow at residues 394–480 (EVHL…IVHC) and 485–560 (TAII…TMPA).

In terms of assembly, binds to the cytoplasmic domain of amyloid protein (APP) in vivo. Interacts with HIF1AN (via N-terminus). Interacts with NECAB3; seems to mediate the interaction between NECAB3 and HIF1AN. Expressed in all tissues examined with lower levels in brain and testis.

It is found in the cytoplasm. The protein localises to the perinuclear region. Functionally, may modulate processing of the amyloid-beta precursor protein (APP) and hence formation of APP-beta. May enhance the activity of HIF1A in macrophages by inhibiting the activity of HIF1AN. This Homo sapiens (Human) protein is Amyloid-beta A4 precursor protein-binding family A member 3 (APBA3).